A 373-amino-acid polypeptide reads, in one-letter code: Carboxylesterase/phospholipase LipF (373 aa).

The Involved in the stabilization of the negatively charged intermediate by the formation of the oxyanion hole motif lies at 116–118; it reads HGG. Residues Ser-186, Glu-285, and His-315 contribute to the active site.

The protein belongs to the 'GDXG' lipolytic enzyme family.

It catalyses the reaction a carboxylic ester + H2O = an alcohol + a carboxylate + H(+). The catalysed reaction is a 1,2-diacyl-sn-glycero-3-phosphocholine + H2O = phosphocholine + a 1,2-diacyl-sn-glycerol + H(+). A short-chain esterase and phospholipase. This Mycobacterium tuberculosis (strain CDC 1551 / Oshkosh) protein is Carboxylesterase/phospholipase LipF.